Consider the following 163-residue polypeptide: MADSSFDVVSKVDRQEVDNALHQAAKELTTRFDFRNTGASIEWSGEETITLNADTEERLLAALDVFKEKLIRRDISLKAFDAGEPAQSGKIYKLSGTLVQGISSENAKKITKKIRDEGPKGVKAQIQGEELRVSSKKRDDLQGVISLLKGEDFGIALQFVNYR.

The protein belongs to the YajQ family.

Functionally, nucleotide-binding protein. This chain is Nucleotide-binding protein RER_17110, found in Rhodococcus erythropolis (strain PR4 / NBRC 100887).